A 918-amino-acid polypeptide reads, in one-letter code: Exostosin-like 3 (918 aa).

Over 1-30 (MTGYTMLRNGGVGNGGQTCMLRWSNRIRLT) the chain is Cytoplasmic. The required for interaction with REG3A stretch occupies residues 1-140 (MTGYTMLRNG…LKNVISQTEH (140 aa)). The chain crosses the membrane as a helical; Signal-anchor for type II membrane protein span at residues 31 to 51 (WLSFTLFIILVFFPLIAHYYL). Residues 52–918 (TTLDEADEAG…HDKTKCFKFI (867 aa)) are Lumenal-facing. 2 disulfides stabilise this stretch: Cys177/Cys182 and Cys188/Cys236. A glycan (N-linked (GlcNAc...) asparagine) is linked at Asn290. At Ser361 the chain carries Phosphoserine. Cys399 and Cys414 are oxidised to a cystine. N-linked (GlcNAc...) asparagine glycosylation occurs at Asn591. UDP-N-acetyl-alpha-D-glucosamine contacts are provided by Leu667, Arg671, Asn696, Asn722, Arg727, Asp743, Asp744, and Asp745. Asp745 provides a ligand contact to Mn(2+). Asn789 carries N-linked (GlcNAc...) asparagine glycosylation. A disulfide bridge connects residues Cys830 and Cys878. 3 residues coordinate UDP-N-acetyl-alpha-D-glucosamine: Glu831, Asp832, and Arg875. Residue Asp832 is part of the active site.

It belongs to the glycosyltransferase 47 family. As to quaternary structure, homodimer; disulfide-linked. Interacts with REG3A. It depends on Mn(2+) as a cofactor. As to expression, expressed in pancreatic islet beta-cells. Expressed in lung epithelial cells. Expressed in microglia.

It localises to the endoplasmic reticulum membrane. The protein resides in the golgi apparatus. It is found in the cell membrane. The protein localises to the nucleus. It carries out the reaction 3-O-(beta-D-GlcA-(1-&gt;3)-beta-D-Gal-(1-&gt;3)-beta-D-Gal-(1-&gt;4)-beta-D-Xyl)-L-seryl-[protein] + UDP-N-acetyl-alpha-D-glucosamine = 3-O-(alpha-D-GlcNAc-(1-&gt;4)-beta-D-GlcA-(1-&gt;3)-beta-D-Gal-(1-&gt;3)-beta-D-Gal-(1-&gt;4)-beta-D-Xyl)-L-seryl-[protein] + UDP + H(+). Its pathway is glycan metabolism; heparan sulfate biosynthesis. Glycosyltransferase which regulates the biosynthesis of heparan sulfate (HS). Initiates HS synthesis by transferring the first N-acetyl-alpha-D-glucosamine (alpha-GlcNAc) residue (GlcNAcT-I activity) to the tetrasaccharide linker (GlcA-Gal-Gal-Xyl-)Ser core linker. May also transfer alpha-GlcNAc residues during HS elongation (GlcNAcT-II activity). Lacks glucuronyl transferase II (GlcAT-II) activity. Important for both skeletal development and hematopoiesis, through the formation of HS proteoglycans (HSPGs). Through the synthesis of HS, regulates postnatal pancreatic islet maturation and insulin secretion. Its function is as follows. Receptor for REG3A, REG3B and REG3G, induces the activation of downstream signaling pathways such as PI3K-AKT or RAS-RAF-MEK-ERK signaling pathway. Required for the function of REG3A in regulating keratinocyte proliferation and differentiation. Required for the inhibition of skin inflammation mediated by REG3A through the activation of PI3K-AKT-STAT3 pathway. Required for the function of REG3A and REG3G in glucose tolerance in pancreas. Expressed in microglia, is activated by nociceptor-derived REG3G in response to endotoxins, leading to the inhibition of kynurenine pathway to prevent endotoxic death. The protein is Exostosin-like 3 of Mus musculus (Mouse).